Consider the following 497-residue polypeptide: Lysine--tRNA ligase (497 aa).

Residues Glu406 and Glu413 each coordinate Mg(2+).

The protein belongs to the class-II aminoacyl-tRNA synthetase family. Homodimer. The cofactor is Mg(2+).

It localises to the cytoplasm. The enzyme catalyses tRNA(Lys) + L-lysine + ATP = L-lysyl-tRNA(Lys) + AMP + diphosphate. This is Lysine--tRNA ligase from Rhizobium leguminosarum bv. trifolii (strain WSM2304).